The chain runs to 496 residues: Glutamate--tRNA ligase (496 aa).

The 'HIGH' region signature appears at 12–22 (PSPTGTPHVGL). The 'KMSKS' region motif lies at 256–260 (KLSKR). Lys-259 serves as a coordination point for ATP.

It belongs to the class-I aminoacyl-tRNA synthetase family. Glutamate--tRNA ligase type 1 subfamily. Monomer.

It is found in the cytoplasm. It carries out the reaction tRNA(Glu) + L-glutamate + ATP = L-glutamyl-tRNA(Glu) + AMP + diphosphate. In terms of biological role, catalyzes the attachment of glutamate to tRNA(Glu) in a two-step reaction: glutamate is first activated by ATP to form Glu-AMP and then transferred to the acceptor end of tRNA(Glu). The sequence is that of Glutamate--tRNA ligase from Mycobacteroides abscessus (strain ATCC 19977 / DSM 44196 / CCUG 20993 / CIP 104536 / JCM 13569 / NCTC 13031 / TMC 1543 / L948) (Mycobacterium abscessus).